Consider the following 155-residue polypeptide: Small ribosomal subunit protein uS7cz/uS7cy (155 aa).

In terms of assembly, component of the chloroplast small ribosomal subunit (SSU). Mature 70S chloroplast ribosomes of higher plants consist of a small (30S) and a large (50S) subunit. The 30S small subunit contains 1 molecule of ribosomal RNA (16S rRNA) and 24 different proteins. The 50S large subunit contains 3 rRNA molecules (23S, 5S and 4.5S rRNA) and 33 different proteins.

It is found in the plastid. The protein resides in the chloroplast. In terms of biological role, component of the chloroplast ribosome (chloro-ribosome), a dedicated translation machinery responsible for the synthesis of chloroplast genome-encoded proteins, including proteins of the transcription and translation machinery and components of the photosynthetic apparatus. The chain is Small ribosomal subunit protein uS7cz/uS7cy (rps7-A) from Spinacia oleracea (Spinach).